Consider the following 725-residue polypeptide: Polyribonucleotide nucleotidyltransferase (725 aa).

Mg(2+)-binding residues include Asp-487 and Asp-493. The 60-residue stretch at 554-613 (PRIETMQIPTDKIREVIGTGGKVIREIVEKTGAKIDIQDTGVIKIASSDAKAIKAAYNWI) folds into the KH domain. In terms of domain architecture, S1 motif spans 623-691 (GMIYDGTVVK…ERGKIRLSMK (69 aa)). The tract at residues 697–725 (TGEDITEKLKAEREADRNRERQARQSAGE) is disordered. Basic and acidic residues predominate over residues 701-719 (ITEKLKAEREADRNRERQA).

This sequence belongs to the polyribonucleotide nucleotidyltransferase family. Mg(2+) is required as a cofactor.

The protein localises to the cytoplasm. The catalysed reaction is RNA(n+1) + phosphate = RNA(n) + a ribonucleoside 5'-diphosphate. Involved in mRNA degradation. Catalyzes the phosphorolysis of single-stranded polyribonucleotides processively in the 3'- to 5'-direction. This Methylobacterium nodulans (strain LMG 21967 / CNCM I-2342 / ORS 2060) protein is Polyribonucleotide nucleotidyltransferase.